Consider the following 309-residue polypeptide: Transcriptional regulator HilD (309 aa).

The 98-residue stretch at 209 to 306 (ERVYNIISSS…KTTPSTFIKM (98 aa)) folds into the HTH araC/xylS-type domain. 2 DNA-binding regions (H-T-H motif) span residues 226-247 (TDVADHIFMSTSTLKRKLAEEG) and 273-296 (VNAVALKCGYDSTSYFIQCFKKYF).

The polypeptide is Transcriptional regulator HilD (hilD) (Salmonella typhimurium (strain SL1344)).